Reading from the N-terminus, the 445-residue chain is 3-dehydroquinate synthase, chloroplastic (445 aa).

The N-terminal 68 residues, 1–68, are a transit peptide targeting the chloroplast; that stretch reads MAAFSLSAKQ…RASASSTAPV (68 aa). Residues asparagine 122, 153–155, lysine 158, 186–191, 211–212, lysine 224, lysine 233, and 251–254 contribute to the NAD(+) site; these read DGE, GGVIGD, TT, and TLNT. Residue glutamate 266 participates in a divalent metal cation binding. Lysine 308 is a binding site for NAD(+). Residues histidine 329 and histidine 346 each contribute to the a divalent metal cation site.

The protein belongs to the sugar phosphate cyclases superfamily. Dehydroquinate synthase family. As to quaternary structure, homodimer. Requires a divalent metal cation as cofactor. It depends on NAD(+) as a cofactor.

Its subcellular location is the plastid. The protein localises to the chloroplast. The catalysed reaction is 7-phospho-2-dehydro-3-deoxy-D-arabino-heptonate = 3-dehydroquinate + phosphate. It participates in metabolic intermediate biosynthesis; chorismate biosynthesis; chorismate from D-erythrose 4-phosphate and phosphoenolpyruvate: step 2/7. Functionally, catalyzes the second step in the shikimate pathway. The sequence is that of 3-dehydroquinate synthase, chloroplastic (DHQS) from Actinidia chinensis var. chinensis (Chinese soft-hair kiwi).